A 264-amino-acid chain; its full sequence is Proliferating cell nuclear antigen (264 aa).

Residues 61-80 (RCDRNISMGMNLGNMAKMLK) mediate DNA binding.

Belongs to the PCNA family.

It localises to the nucleus. Functionally, this protein is an auxiliary protein of DNA polymerase delta and is involved in the control of eukaryotic DNA replication by increasing the polymerase's processibility during elongation of the leading strand. In Daucus carota (Wild carrot), this protein is Proliferating cell nuclear antigen.